A 190-amino-acid chain; its full sequence is Female-specific histamine-binding protein 1 (190 aa).

The signal sequence occupies residues M1 to A18. The histamine site is built by Y54, D57, W60, E100, Y118, E153, and W155. 2 disulfides stabilise this stretch: C66–C187 and C137–C166.

It belongs to the calycin superfamily. Histamine-binding salivary protein family. As to quaternary structure, monomer. As to expression, expressed in salivary glands.

Its subcellular location is the secreted. Functionally, salivary tick protein that acts by scavenging histamine at the wound site, outcompeting histamine receptors for histamine, thereby overcoming host inflammatory responses. Binds histamine with a high-affinity (Kd=18 nM). Contains two binding histamine sites (H and L), that appear to bind histamine with differing affinities (high and low). In vivo, when tested on a mouse asthma model, shows a profound inhibitory effect on allergic asthma. Aerosol administration of this protein prevents airway hyperreactivity and abrogates peribronchial inflammation, eosinophil recruitment, mucus hypersecretion, and interleukins (IL-4 and IL-5) secretion. In addition, when tested on a mouse model of acute respiratory distress syndrome (ARDS), it attenuates endotoxin-induced acute lung injury. The chain is Female-specific histamine-binding protein 1 from Rhipicephalus appendiculatus (Brown ear tick).